We begin with the raw amino-acid sequence, 203 residues long: Ribosomal RNA small subunit methyltransferase G (203 aa).

S-adenosyl-L-methionine is bound by residues Gly-73, Leu-78, 124–125 (VE), and Arg-138.

Belongs to the methyltransferase superfamily. RNA methyltransferase RsmG family.

Its subcellular location is the cytoplasm. It catalyses the reaction guanosine(527) in 16S rRNA + S-adenosyl-L-methionine = N(7)-methylguanosine(527) in 16S rRNA + S-adenosyl-L-homocysteine. In terms of biological role, specifically methylates the N7 position of guanine in position 527 of 16S rRNA. The sequence is that of Ribosomal RNA small subunit methyltransferase G from Glaesserella parasuis serovar 5 (strain SH0165) (Haemophilus parasuis).